The chain runs to 177 residues: NADH-quinone oxidoreductase subunit B (177 aa).

The [4Fe-4S] cluster site is built by cysteine 53, cysteine 54, cysteine 118, and cysteine 148.

The protein belongs to the complex I 20 kDa subunit family. NDH-1 is composed of 14 different subunits. Subunits NuoB, C, D, E, F, and G constitute the peripheral sector of the complex. It depends on [4Fe-4S] cluster as a cofactor.

The protein localises to the cell membrane. It catalyses the reaction a quinone + NADH + 5 H(+)(in) = a quinol + NAD(+) + 4 H(+)(out). In terms of biological role, NDH-1 shuttles electrons from NADH, via FMN and iron-sulfur (Fe-S) centers, to quinones in the respiratory chain. The immediate electron acceptor for the enzyme in this species is believed to be a menaquinone. Couples the redox reaction to proton translocation (for every two electrons transferred, four hydrogen ions are translocated across the cytoplasmic membrane), and thus conserves the redox energy in a proton gradient. In Anoxybacillus flavithermus (strain DSM 21510 / WK1), this protein is NADH-quinone oxidoreductase subunit B.